Reading from the N-terminus, the 347-residue chain is NADH-quinone oxidoreductase subunit H (347 aa).

A run of 9 helical transmembrane segments spans residues 13-33, 50-70, 82-102, 115-135, 161-181, 198-218, 263-283, 286-306, and 321-341; these read IIMI…IAYV, PNVV…KFVF, AVFL…WAVV, VGIL…IMGG, IGFV…TDIV, FLDW…ISAL, CSLT…IWIL, VPGI…FAMV, and LGWK…AFVL.

It belongs to the complex I subunit 1 family. In terms of assembly, NDH-1 is composed of 14 different subunits. Subunits NuoA, H, J, K, L, M, N constitute the membrane sector of the complex.

It localises to the cell inner membrane. The enzyme catalyses a quinone + NADH + 5 H(+)(in) = a quinol + NAD(+) + 4 H(+)(out). NDH-1 shuttles electrons from NADH, via FMN and iron-sulfur (Fe-S) centers, to quinones in the respiratory chain. The immediate electron acceptor for the enzyme in this species is believed to be ubiquinone. Couples the redox reaction to proton translocation (for every two electrons transferred, four hydrogen ions are translocated across the cytoplasmic membrane), and thus conserves the redox energy in a proton gradient. This subunit may bind ubiquinone. The polypeptide is NADH-quinone oxidoreductase subunit H (Rhizobium leguminosarum bv. trifolii (strain WSM2304)).